A 409-amino-acid chain; its full sequence is MKVLRFNQDASCFSAVSRPHSMTIYNCDPFGKCFELENSVVTSESCDTECLTKAQGDQCSNFVTEMLFATSLIAVVNRDQGLQKARKLRIVNTKRKTTICELTFPHEVVDIVMNRKRMCVLLSSDQIFIYDISCMKLLQTISVLEDKLKMAVSDQGHVSTSVVGRQLQGETSMVRIALCSDDKSILCYTAYCRTNKNSYILNDLVVYDALNMTPLNYLNTVHKGNVACLCISNDGKMVATASDKGTIVRIFSTGDENTLQSGNTLLHEFRRGTRPCSIYEMKIDPTRRYLACVGHTDTIHIFDLERQGQQNKSLSDSQSTALLREGKLSKESTLQFASFLSKKVISKIPNQNMERHFAHIKVDDSVRHCLGFPDEFSDRVYVASNNGEFQVWNIPQSGGECILVKKSKF.

4 WD repeats span residues 1-35, 221-261, 273-312, and 361-402; these read MKVL…KCFE, VHKG…TLQS, TRPC…QQNK, and KVDD…GECI. The L/FRRG motif motif lies at 269–273; the sequence is FRRGT.

It belongs to the WD repeat PROPPIN family.

The protein localises to the cytoplasm. It is found in the membrane. It localises to the vacuole membrane. Its function is as follows. Required for cytoplasm to vacuole transport (Cvt) vesicles formation and mitophagy. Involved in binding of phosphatidylethanolamine to ATG8 and in recruitment of ATG8 and ATG5 to the pre-autophagosomal structure. Protects ATG8 from ARG4-mediated cleavage. This is Autophagy-related protein 21 (ATG21) from Eremothecium gossypii (strain ATCC 10895 / CBS 109.51 / FGSC 9923 / NRRL Y-1056) (Yeast).